Here is a 257-residue protein sequence, read N- to C-terminus: 3-deoxy-manno-octulosonate cytidylyltransferase (257 aa).

This sequence belongs to the KdsB family.

It localises to the cytoplasm. It carries out the reaction 3-deoxy-alpha-D-manno-oct-2-ulosonate + CTP = CMP-3-deoxy-beta-D-manno-octulosonate + diphosphate. It functions in the pathway nucleotide-sugar biosynthesis; CMP-3-deoxy-D-manno-octulosonate biosynthesis; CMP-3-deoxy-D-manno-octulosonate from 3-deoxy-D-manno-octulosonate and CTP: step 1/1. It participates in bacterial outer membrane biogenesis; lipopolysaccharide biosynthesis. Activates KDO (a required 8-carbon sugar) for incorporation into bacterial lipopolysaccharide in Gram-negative bacteria. In Halorhodospira halophila (strain DSM 244 / SL1) (Ectothiorhodospira halophila (strain DSM 244 / SL1)), this protein is 3-deoxy-manno-octulosonate cytidylyltransferase.